Here is a 219-residue protein sequence, read N- to C-terminus: uncharacterized protein (219 aa).

Aspartate 58 is an active-site residue.

The protein belongs to the pseudouridine synthase RluA family.

It carries out the reaction a uridine in RNA = a pseudouridine in RNA. This is an uncharacterized protein from Zymomonas mobilis subsp. mobilis (strain ATCC 31821 / ZM4 / CP4).